We begin with the raw amino-acid sequence, 637 residues long: Chaperone protein HtpG (637 aa).

Residues 1-345 (MSQQETHGFQ…SNDLPLNVSR (345 aa)) form an a; substrate-binding region. The segment at 346-562 (EILQDNHITK…EGEMSSQMIK (217 aa)) is b. The c stretch occupies residues 563–637 (LMQAAGQPVP…MNQMLLANLK (75 aa)).

The protein belongs to the heat shock protein 90 family. In terms of assembly, homodimer.

The protein localises to the cytoplasm. Molecular chaperone. Has ATPase activity. In Shewanella sp. (strain MR-7), this protein is Chaperone protein HtpG.